Here is a 101-residue protein sequence, read N- to C-terminus: Ubiquitin-related modifier 1 (101 aa).

Glycine 101 is subject to 1-thioglycine. A Glycyl lysine isopeptide (Gly-Lys) (interchain with K-? in acceptor proteins) cross-link involves residue glycine 101.

This sequence belongs to the URM1 family. In terms of processing, C-terminal thiocarboxylation occurs in 2 steps, it is first acyl-adenylated (-COAMP) via the hesA/moeB/thiF part of UBA4, then thiocarboxylated (-COSH) via the rhodanese domain of UBA4.

It is found in the cytoplasm. It participates in tRNA modification; 5-methoxycarbonylmethyl-2-thiouridine-tRNA biosynthesis. Acts as a sulfur carrier required for 2-thiolation of mcm(5)S(2)U at tRNA wobble positions of cytosolic tRNA(Lys), tRNA(Glu) and tRNA(Gln). Serves as sulfur donor in tRNA 2-thiolation reaction by being thiocarboxylated (-COSH) at its C-terminus by the MOCS3 homolog UBA4. The sulfur is then transferred to tRNA to form 2-thiolation of mcm(5)S(2)U. Prior mcm(5) tRNA modification by the elongator complex is required for 2-thiolation. Also acts as a ubiquitin-like protein (UBL) that is covalently conjugated via an isopeptide bond to lysine residues of target proteins such as AHP1. The thiocarboxylated form serves as substrate for conjugation and oxidative stress specifically induces the formation of UBL-protein conjugates. The sequence is that of Ubiquitin-related modifier 1 from Kluyveromyces lactis (strain ATCC 8585 / CBS 2359 / DSM 70799 / NBRC 1267 / NRRL Y-1140 / WM37) (Yeast).